Consider the following 321-residue polypeptide: Non-canonical heme oxygenase HOZ, chloroplastic (321 aa).

The transit peptide at 1–45 directs the protein to the chloroplast; that stretch reads MKSLVAHFSTPLITARLVPRCIIHRASISAVSFSTVRRRFSPLTM. The interval 96 to 116 is dimerization; it reads CGMLSTFSQKYEGYPSGSMVD. Residues Ser130, Val134, and His135 each coordinate heme b. 2 dimerization regions span residues 144–166 and 205–208; these read KCSL…LHGD and KVVR.

As to quaternary structure, homodimer. Binds to heme in the interdimer interface; the heme iron is coordinated by a fixed water molecule.

The protein resides in the plastid. The protein localises to the chloroplast. Its function is as follows. Dimeric beta-barrel protein binding to heme and catalyzing its degradation to produce biliverdin. May function in the tetrapyrrole biosynthetic pathway. This Arabidopsis thaliana (Mouse-ear cress) protein is Non-canonical heme oxygenase HOZ, chloroplastic.